The sequence spans 1016 residues: Probably inactive leucine-rich repeat receptor-like protein kinase At3g28040 (1016 aa).

Positions 1 to 26 (MGKQRRTMISFTLFLTLTMMSSLING) are cleaved as a signal peptide. At 27 to 646 (DTDSIQLNDD…FHRRMFLSVS (620 aa)) the chain is on the extracellular side. 20 LRR repeats span residues 102-124 (RLKV…SNNN), 125-147 (HLQK…LGSI), 149-171 (SLQH…LFNN), 174-196 (SLRY…LFRC), 198-219 (VLNS…VSGI), 224-245 (RLRA…GILS), 248-270 (NLKE…IGLC), 272-295 (HLNR…QKLK), 296-318 (SLNH…IGDM), 320-342 (GLVH…ISNL), 344-366 (SLKD…LESC), 368-390 (ELMI…FFDL), 391-413 (GLQE…SSRL), 416-438 (SLIR…VGLF), 440-462 (HMRY…IEFL), 464-486 (NLTV…ICES), 488-510 (SLQI…IGNC), 512-535 (SLKL…SNLQ), 536-559 (ELKI…GDLQ), and 560-582 (NLLL…DVFQ). 3 N-linked (GlcNAc...) asparagine glycosylation sites follow: asparagine 112, asparagine 135, and asparagine 171. Asparagine 203 is a glycosylation site (N-linked (GlcNAc...) asparagine). N-linked (GlcNAc...) asparagine glycosylation is present at asparagine 349. N-linked (GlcNAc...) asparagine glycosylation is found at asparagine 445, asparagine 464, asparagine 509, and asparagine 522. N-linked (GlcNAc...) asparagine glycosylation is present at asparagine 565. The chain crosses the membrane as a helical span at residues 647-667 (VIVAISAAILIFSGVIIITLL). At 668-1016 (NASVRRRLAF…PVPHRIMDSF (349 aa)) the chain is on the cytoplasmic side. Residues 726-1013 (LNKASRIGEG…INSPVPHRIM (288 aa)) enclose the Protein kinase domain. ATP contacts are provided by residues 732–740 (IGEGVFGTV) and lysine 755. Residues tyrosine 841 and tyrosine 898 each carry the phosphotyrosine modification.

The protein belongs to the protein kinase superfamily. Ser/Thr protein kinase family.

The protein resides in the membrane. This is Probably inactive leucine-rich repeat receptor-like protein kinase At3g28040 from Arabidopsis thaliana (Mouse-ear cress).